A 448-amino-acid chain; its full sequence is 3-phosphoshikimate 1-carboxyvinyltransferase (448 aa).

Lys-38, Ser-39, and Arg-43 together coordinate 3-phosphoshikimate. Lys-38 provides a ligand contact to phosphoenolpyruvate. Phosphoenolpyruvate-binding residues include Gly-111 and Arg-140. 3-phosphoshikimate-binding residues include Ser-185, Gln-187, Asp-335, and Lys-362. Gln-187 serves as a coordination point for phosphoenolpyruvate. Catalysis depends on Asp-335, which acts as the Proton acceptor. Phosphoenolpyruvate-binding residues include Arg-366 and Arg-408.

Belongs to the EPSP synthase family. In terms of assembly, monomer.

It is found in the cytoplasm. It catalyses the reaction 3-phosphoshikimate + phosphoenolpyruvate = 5-O-(1-carboxyvinyl)-3-phosphoshikimate + phosphate. Its pathway is metabolic intermediate biosynthesis; chorismate biosynthesis; chorismate from D-erythrose 4-phosphate and phosphoenolpyruvate: step 6/7. Catalyzes the transfer of the enolpyruvyl moiety of phosphoenolpyruvate (PEP) to the 5-hydroxyl of shikimate-3-phosphate (S3P) to produce enolpyruvyl shikimate-3-phosphate and inorganic phosphate. This is 3-phosphoshikimate 1-carboxyvinyltransferase from Synechococcus elongatus (strain ATCC 33912 / PCC 7942 / FACHB-805) (Anacystis nidulans R2).